Reading from the N-terminus, the 459-residue chain is Nuclear hormone receptor family member nhr-11 (459 aa).

The nuclear receptor DNA-binding region spans Gly-2–Ser-81. 2 NR C4-type zinc fingers span residues Cys-5 to Cys-26 and Cys-42 to Cys-69. Disordered regions lie at residues Arg-90–Asp-119 and Asp-134–Asp-162. A compositionally biased stretch (low complexity) spans Asn-97 to Pro-115. Residues Glu-188–Gln-458 form the NR LBD domain.

Belongs to the nuclear hormone receptor family.

The protein resides in the nucleus. Functionally, orphan nuclear receptor. This chain is Nuclear hormone receptor family member nhr-11 (nhr-11), found in Caenorhabditis elegans.